The chain runs to 366 residues: NAD(P)H-quinone oxidoreductase subunit 1, chloroplastic (366 aa).

8 consecutive transmembrane segments (helical) span residues 29–49 (WITASILILVSGVVIGVLVIV), 97–117 (LLFSIGPAIVVIPVLLSYLVI), 130–150 (IGVFFWIAVSSIAPLGLFMAG), 166–186 (VAQAISYEIPLALCVLSISLL), 202–222 (FGFWGWNVWRQPIGFIAFLIA), 254–274 (FGLFYVASYLNLLVSSLFVTV), 307–327 (VIIGIIITLAKAYSFLFISIV), and 340–360 (LLNLGWKFLLPIALGNLLLTA).

This sequence belongs to the complex I subunit 1 family. As to quaternary structure, NDH is composed of at least 16 different subunits, 5 of which are encoded in the nucleus.

It is found in the plastid. The protein localises to the chloroplast thylakoid membrane. The enzyme catalyses a plastoquinone + NADH + (n+1) H(+)(in) = a plastoquinol + NAD(+) + n H(+)(out). It catalyses the reaction a plastoquinone + NADPH + (n+1) H(+)(in) = a plastoquinol + NADP(+) + n H(+)(out). Its function is as follows. NDH shuttles electrons from NAD(P)H:plastoquinone, via FMN and iron-sulfur (Fe-S) centers, to quinones in the photosynthetic chain and possibly in a chloroplast respiratory chain. The immediate electron acceptor for the enzyme in this species is believed to be plastoquinone. Couples the redox reaction to proton translocation, and thus conserves the redox energy in a proton gradient. The protein is NAD(P)H-quinone oxidoreductase subunit 1, chloroplastic of Anthoceros angustus (Hornwort).